The chain runs to 152 residues: uncharacterized protein (152 aa).

5 helical membrane-spanning segments follow: residues 2–22 (GVVFAFGFYLIFIKLTGLKLM), 33–53 (LKMIFSILSVILAFLINWLIM), 58–78 (FLIEIIHPIASVWIFIILIYL), 97–117 (FMGNMSAIAIFLELLKIIEYV), and 122–142 (IASPITVALVFFIPVVVFFNC).

It localises to the cell membrane. This is an uncharacterized protein from Methanocaldococcus jannaschii (strain ATCC 43067 / DSM 2661 / JAL-1 / JCM 10045 / NBRC 100440) (Methanococcus jannaschii).